We begin with the raw amino-acid sequence, 402 residues long: tRNA pseudouridine synthase Pus10 (402 aa).

A THUMP domain is found at 37–159 (RLRGERLVEK…QIRVHVQINP (123 aa)). The active-site Nucleophile is Asp-228. Tyr-296 and Tyr-364 together coordinate substrate.

It belongs to the pseudouridine synthase Pus10 family.

The catalysed reaction is uridine(54) in tRNA = pseudouridine(54) in tRNA. The enzyme catalyses uridine(55) in tRNA = pseudouridine(55) in tRNA. Functionally, responsible for synthesis of pseudouridine from uracil-54 and uracil-55 in the psi GC loop of transfer RNAs. This is tRNA pseudouridine synthase Pus10 from Methanothermobacter marburgensis (strain ATCC BAA-927 / DSM 2133 / JCM 14651 / NBRC 100331 / OCM 82 / Marburg) (Methanobacterium thermoautotrophicum).